The chain runs to 319 residues: Annexin A4 (319 aa).

Thr7 bears the Phosphothreonine mark. Residue Ser12 is modified to Phosphoserine. Annexin repeat units lie at residues 14 to 85, 86 to 157, 169 to 241, and 245 to 316; these read FNAT…GLMT, PTVL…SLSA, ALMK…AIVK, and SKPS…VLCG. Residues Lys213, Lys293, and Lys300 each carry the N6-acetyllysine modification.

It belongs to the annexin family.

Its subcellular location is the zymogen granule membrane. Calcium/phospholipid-binding protein which promotes membrane fusion and is involved in exocytosis. This is Annexin A4 (Anxa4) from Mus musculus (Mouse).